Consider the following 452-residue polypeptide: Neuromedin-K receptor (452 aa).

Over 1 to 71 (MASVPRGENW…TNQFVQPSWR (71 aa)) the chain is Extracellular. Asparagine 9, asparagine 23, asparagine 40, and asparagine 60 each carry an N-linked (GlcNAc...) asparagine glycan. The helical transmembrane segment at 72-94 (IALWSLAYGLVVAVAVFGNLIVI) threads the bilayer. The Cytoplasmic portion of the chain corresponds to 95 to 104 (WIILAHKRMR). Residues 105–126 (TVTNYFLVNLAFSDASVAAFNT) form a helical membrane-spanning segment. At 127–146 (LINFIYGLHSEWYFGANYCR) the chain is on the extracellular side. Cysteine 145 and cysteine 220 are joined by a disulfide. Residues 147 to 168 (FQNFFPITAVFASIYSMTAIAV) form a helical membrane-spanning segment. The Cytoplasmic segment spans residues 169 to 188 (DRYMAIIDPLKPRLSATATK). The chain crosses the membrane as a helical span at residues 189–209 (IVIGSIWILAFLLAFPQCLYS). At 210–232 (KIKVMPGRTLCYVQWPEGPKQHF) the chain is on the extracellular side. The chain crosses the membrane as a helical span at residues 233–257 (TYHIIVIILVYCFPLLIMGVTYTIV). The Cytoplasmic portion of the chain corresponds to 258–286 (GITLWGGEIPGDTCDKYHEQLKAKRKVVK). A helical membrane pass occupies residues 287–308 (MMIIVVVTFAICWLPYHVYFIL). Over 309 to 321 (TAIYQQLNRWKYI) the chain is Extracellular. A helical membrane pass occupies residues 322 to 346 (QQVYLASFWLAMSSTMYNPIIYCCL). The Cytoplasmic segment spans residues 347–452 (NKRFRAGFKR…SPYTSVDEYS (106 aa)). Cysteine 361 is lipidated: S-palmitoyl cysteine. The interval 400–452 (FDPNDGDPTKSSRKKRAVPRDPSANGCSHRGSKSASTTSSFISSPYTSVDEYS) is disordered. A compositionally biased stretch (low complexity) spans 432 to 452 (KSASTTSSFISSPYTSVDEYS).

This sequence belongs to the G-protein coupled receptor 1 family. The anchoring of this receptor to the plasma membrane is probably mediated by the palmitoylation of a cysteine residue.

It is found in the cell membrane. Its function is as follows. This is a receptor for the tachykinin neuropeptide neuromedin-K (neurokinin B). It is associated with G proteins that activate a phosphatidylinositol-calcium second messenger system. The rank order of affinity of this receptor to tachykinins is: neuromedin-K &gt; substance K &gt; substance P. This Rattus norvegicus (Rat) protein is Neuromedin-K receptor (Tacr3).